Consider the following 274-residue polypeptide: Rhamnulose-1-phosphate aldolase (274 aa).

The active site involves E117. Residues H141, H143, and H212 each coordinate Zn(2+).

It belongs to the aldolase class II family. RhaD subfamily. Homotetramer. Zn(2+) serves as cofactor.

The protein localises to the cytoplasm. It carries out the reaction L-rhamnulose 1-phosphate = (S)-lactaldehyde + dihydroxyacetone phosphate. It participates in carbohydrate degradation; L-rhamnose degradation; glycerone phosphate from L-rhamnose: step 3/3. In terms of biological role, catalyzes the reversible cleavage of L-rhamnulose-1-phosphate to dihydroxyacetone phosphate (DHAP) and L-lactaldehyde. The polypeptide is Rhamnulose-1-phosphate aldolase (Shigella sonnei (strain Ss046)).